The primary structure comprises 295 residues: Probable deoxyhypusine synthase (295 aa).

Lys-267 functions as the Nucleophile in the catalytic mechanism.

It belongs to the deoxyhypusine synthase family. NAD(+) is required as a cofactor.

The enzyme catalyses [eIF5A protein]-L-lysine + spermidine = [eIF5A protein]-deoxyhypusine + propane-1,3-diamine. The protein operates within protein modification; eIF5A hypusination. Catalyzes the NAD-dependent oxidative cleavage of spermidine and the subsequent transfer of the butylamine moiety of spermidine to the epsilon-amino group of a specific lysine residue of the eIF-5A precursor protein to form the intermediate deoxyhypusine residue. The sequence is that of Probable deoxyhypusine synthase from Pyrobaculum calidifontis (strain DSM 21063 / JCM 11548 / VA1).